Consider the following 301-residue polypeptide: Recombination-associated protein RdgC (301 aa).

The protein belongs to the RdgC family.

Its subcellular location is the cytoplasm. The protein resides in the nucleoid. In terms of biological role, may be involved in recombination. The chain is Recombination-associated protein RdgC from Xanthomonas axonopodis pv. citri (strain 306).